Here is a 516-residue protein sequence, read N- to C-terminus: MNVFFMFSLLFLAALGSCAHDRNPLEECFRETDYEEFLEIAKNGLTATSNPKRVVIVGAGMAGLSAAYVLAGAGHQVTVLEASERVGGRVRTYRKKDWYANLGPMRLPTKHRIVREYIKKFDLKLNEFSQENENAWYFIKNIRKRVREVKNNPGLLEYPVKPSEEGKSAAQLYVESLRKVVKELKRTNCKYILDKYDTYSTKEYLLKEGNLSPGAVDMIGDLLNEDSGYYVSFIESLKHDDIFGYEKRFDEIVGGMDQLPTSMYEAIKEKVQVHFNARVIEIQQNDREATVTYQTSANEMSSVTADYVIVCTTSRAARRIKFEPPLPPKKAHALRSVHYRSGTKIFLTCKKKFWEDDGIRGGKSTTDLPSRFIYYPNHNFTSGVGVIIAYGIGDDANFFQALDFKDCADIVINDLSLIHQLPKEDIQTFCRPSMIQRWSLDKYAMGGITTFTPYQFQHFSEALTAPFKRIYFAGEYTAQFHGWIDSTIKSGLTAARDVNRASENPSGIHLSNDNEF.

Positions 1–18 (MNVFFMFSLLFLAALGSC) are cleaved as a signal peptide. Cys-28 and Cys-189 are oxidised to a cystine. FAD contacts are provided by residues 61–62 (MA), 81–82 (EA), Arg-89, and 103–106 (GPMR). Arg-106 and His-239 together coordinate substrate. FAD is bound at residue Val-279. Cys-349 and Cys-430 form a disulfide bridge. An N-linked (GlcNAc...) asparagine glycan is attached at Asn-379. Tyr-390 contributes to the substrate binding site. FAD is bound by residues Glu-475 and 482 to 487 (GWIDST). 482-483 (GW) provides a ligand contact to substrate.

The protein belongs to the flavin monoamine oxidase family. FIG1 subfamily. In terms of assembly, homodimer; non-covalently linked. The cofactor is FAD. Expressed by the venom gland.

The protein localises to the secreted. The catalysed reaction is an L-alpha-amino acid + O2 + H2O = a 2-oxocarboxylate + H2O2 + NH4(+). Functionally, catalyzes an oxidative deamination of predominantly hydrophobic and aromatic L-amino acids, thus producing hydrogen peroxide that may contribute to the diverse toxic effects of this enzyme. Exhibits diverse biological activities, such as hemolysis, edema, hemorrhage, apoptosis, antibacterial and antiparasitic activities, as well as regulation of platelet aggregation. Effects of snake L-amino oxidases on platelets are controversial, since they either induce aggregation or inhibit agonist-induced aggregation. These different effects are probably due to different experimental conditions. This Crotalus adamanteus (Eastern diamondback rattlesnake) protein is L-amino-acid oxidase.